The sequence spans 677 residues: UvrABC system protein B (677 aa).

A Helicase ATP-binding domain is found at 27-192 (ANLGQGVRDQ…QRNDFDFHRG (166 aa)). Residue 40–47 (GVTGSGKT) coordinates ATP. A Beta-hairpin motif is present at residues 93 to 116 (YYDYYQPEAYVPASDTYIEKDSSI). A Helicase C-terminal domain is found at 432–594 (QVDDLLAECR…IEPRTIRKSL (163 aa)). Positions 638–673 (AKHIQKLEREMREAAKELEFERAATLRDRIRLLRER) constitute a UVR domain.

It belongs to the UvrB family. As to quaternary structure, forms a heterotetramer with UvrA during the search for lesions. Interacts with UvrC in an incision complex.

Its subcellular location is the cytoplasm. Its function is as follows. The UvrABC repair system catalyzes the recognition and processing of DNA lesions. A damage recognition complex composed of 2 UvrA and 2 UvrB subunits scans DNA for abnormalities. Upon binding of the UvrA(2)B(2) complex to a putative damaged site, the DNA wraps around one UvrB monomer. DNA wrap is dependent on ATP binding by UvrB and probably causes local melting of the DNA helix, facilitating insertion of UvrB beta-hairpin between the DNA strands. Then UvrB probes one DNA strand for the presence of a lesion. If a lesion is found the UvrA subunits dissociate and the UvrB-DNA preincision complex is formed. This complex is subsequently bound by UvrC and the second UvrB is released. If no lesion is found, the DNA wraps around the other UvrB subunit that will check the other stand for damage. The chain is UvrABC system protein B from Nitratidesulfovibrio vulgaris (strain DP4) (Desulfovibrio vulgaris).